The chain runs to 325 residues: RNA ligase 1 (325 aa).

Mg(2+) serves as cofactor. It depends on Mn(2+) as a cofactor. AMPylates itself (auto-AMPylation).

The catalysed reaction is ATP + (ribonucleotide)n-3'-hydroxyl + 5'-phospho-(ribonucleotide)m = (ribonucleotide)n+m + AMP + diphosphate.. Functionally, functions as an RNA ligase, in vitro. The ligation reaction entails three nucleotidyl transfer steps. In the first step, the RNA ligase reacts with ATP in the absence of nucleic acid to form a covalent ligase-AMP intermediate and release pyrophosphate. In step 2, the ligase-AMP binds to the nucleic acid and transfers the adenylate to the 5'-PO4 terminus to form an adenylylated intermediate. In step 3, the RNA ligase directs the attack of the 3'-OH on the 5'-phosphoanhydride linkage, resulting in a repaired 3'-5' phosphodiester and release of AMP. Exhibits selectivity for single-stranded RNA substrates and may not have nick-sealing activity on double-stranded DNA-RNA hybrids. May play a role in maintaining RNA integrity under stress conditions, for example in response to reactive oxygen species (ROS). The chain is RNA ligase 1 from Danio rerio (Zebrafish).